The following is a 71-amino-acid chain: Small ribosomal subunit protein bS18c (71 aa).

It belongs to the bacterial ribosomal protein bS18 family. Part of the 30S ribosomal subunit.

The protein resides in the plastid. The protein localises to the chloroplast. The polypeptide is Small ribosomal subunit protein bS18c (rps18) (Mesostigma viride (Green alga)).